A 555-amino-acid chain; its full sequence is Polypyrimidine tract-binding protein 1 (555 aa).

Met1 carries the post-translational modification N-acetylmethionine. Position 16 is a phosphoserine (Ser16). RRM domains follow at residues 58–142 (RVIH…SSPN), 183–259 (LRII…FSKL), and 361–412 (SVLL…SQAQ). Lys64 participates in a covalent cross-link: Glycyl lysine isopeptide (Lys-Gly) (interchain with G-Cter in SUMO2). Tyr126 bears the Phosphotyrosine mark. Residue Thr137 is modified to Phosphothreonine. Ser140 bears the Phosphoserine mark. Residue Lys217 forms a Glycyl lysine isopeptide (Lys-Gly) (interchain with G-Cter in SUMO2) linkage. Residues 435–457 (HQSVQLPREGQEDQGLTKDYGSS) are disordered. At Ser457 the chain carries Phosphoserine. The region spanning 478–553 (ATLHLSNIPP…HHLRVSFSKS (76 aa)) is the RRM 4 domain.

In terms of assembly, monomer. Part of a ternary complex containing KHSRP, PTBP1, PTBP2 and HNRPH1. Interacts with SFPQ. Interacts with RAVER1. Interacts with IVNS1ABP (via BACK domain); the interaction is direct. As to expression, expressed in myoblast; expression gradually decreases during muscle cell differentiation (at protein level).

Its subcellular location is the nucleus. Plays a role in pre-mRNA splicing and in the regulation of alternative splicing events. Activates exon skipping of its own pre-mRNA during muscle cell differentiation. Binds to the polypyrimidine tract of introns. May promote RNA looping when bound to two separate polypyrimidine tracts in the same pre-mRNA. May promote the binding of U2 snRNP to pre-mRNA. Cooperates with RAVER1 to modulate switching between mutually exclusive exons during maturation of the TPM1 pre-mRNA. Represses the splicing of MAPT/Tau exon 10. Binds to polypyrimidine-rich controlling element (PCE) of CFTR and promotes exon skipping of CFTR exon 9, thereby antagonizing TIA1 and its role in exon inclusion of CFTR exon 9. Plays a role in the splicing of pyruvate kinase PKM by binding repressively to a polypyrimidine tract flanking PKM exon 9, inhibiting exon 9 inclusion and resulting in exon 10 inclusion and production of the PKM M2 isoform. The sequence is that of Polypyrimidine tract-binding protein 1 (Ptbp1) from Mus musculus (Mouse).